A 373-amino-acid chain; its full sequence is Pulmonary surfactant-associated protein B (373 aa).

Residues 1 to 22 form the signal peptide; the sequence is MAKSHLLPWLLLLPILCGPGTA. The propeptide occupies 23–187; the sequence is AAITYSLACA…PQTQDLSEQL (165 aa). Positions 24-64 constitute a Saposin A-type domain; the sequence is AITYSLACAQGPEFWCQSLEQALQCRALGHCLQEVWGHVEA. Saposin B-type domains are found at residues 64–146, 191–268, and 287–362; these read ADDL…KPRH, PIPY…SSED, and QDSD…AAPF. 9 disulfides stabilise this stretch: C68–C142, C71–C136, C99–C111, C195–C264, C198–C258, C222–C233, C291–C358, C294–C352, and C317–C327. Residue N73 is glycosylated (N-linked (GlcNAc...) asparagine). Residues 267-373 constitute a propeptide that is removed on maturation; the sequence is EDSAGPALPA…PLQCVHSPHF (107 aa). N303 carries an N-linked (GlcNAc...) asparagine glycan.

Homodimer; disulfide-linked.

The protein resides in the secreted. Its subcellular location is the extracellular space. It is found in the surface film. Functionally, pulmonary surfactant-associated proteins promote alveolar stability by lowering the surface tension at the air-liquid interface in the peripheral air spaces. SP-B increases the collapse pressure of palmitic acid to nearly 70 millinewtons per meter. The chain is Pulmonary surfactant-associated protein B (SFTPB) from Bos taurus (Bovine).